We begin with the raw amino-acid sequence, 278 residues long: Formamidopyrimidine-DNA glycosylase (278 aa).

Proline 2 serves as the catalytic Schiff-base intermediate with DNA. Catalysis depends on glutamate 3, which acts as the Proton donor. The Proton donor; for beta-elimination activity role is filled by lysine 58. Residues histidine 92 and arginine 111 each contribute to the DNA site. An FPG-type zinc finger spans residues 239–273 (HVYGKKGVPCERCGTPIEKIKVAQRGTHFCPKCQI). The Proton donor; for delta-elimination activity role is filled by arginine 263.

Belongs to the FPG family. In terms of assembly, monomer. Zn(2+) serves as cofactor.

It catalyses the reaction Hydrolysis of DNA containing ring-opened 7-methylguanine residues, releasing 2,6-diamino-4-hydroxy-5-(N-methyl)formamidopyrimidine.. It carries out the reaction 2'-deoxyribonucleotide-(2'-deoxyribose 5'-phosphate)-2'-deoxyribonucleotide-DNA = a 3'-end 2'-deoxyribonucleotide-(2,3-dehydro-2,3-deoxyribose 5'-phosphate)-DNA + a 5'-end 5'-phospho-2'-deoxyribonucleoside-DNA + H(+). Functionally, involved in base excision repair of DNA damaged by oxidation or by mutagenic agents. Acts as a DNA glycosylase that recognizes and removes damaged bases. Has a preference for oxidized purines, such as 7,8-dihydro-8-oxoguanine (8-oxoG). Has AP (apurinic/apyrimidinic) lyase activity and introduces nicks in the DNA strand. Cleaves the DNA backbone by beta-delta elimination to generate a single-strand break at the site of the removed base with both 3'- and 5'-phosphates. The protein is Formamidopyrimidine-DNA glycosylase of Latilactobacillus sakei subsp. sakei (strain 23K) (Lactobacillus sakei subsp. sakei).